The sequence spans 309 residues: MKPTFLEFRHLKTLLALKETGSVSLAAKRVYLTQSALSHQIKLIEEQFGLPLFERKSNPLRFTSAGERLIRLANEVMPKVIDAERDLARVKHGDAGQLRIAVECHTCFDWLMPAMDEFRQHWGLVELDIVSGFHTDPVGLLLSHRADWAIVSEIEHNDDVIFKPLFSYEMVGICSKNHSLAEKDIWEAEDFIDETWVTYPVPDDMLDLWRKVLKSKGINPTRRTTELTIAMIQLVASRRGIATIPYWAALPYLEKGYVVARKVTKEGLYSNLYAAIRKEDESLSYLEDFYQTVKSQSFSTLPGLSVLNL.

In terms of domain architecture, HTH lysR-type spans 6 to 63; it reads LEFRHLKTLLALKETGSVSLAAKRVYLTQSALSHQIKLIEEQFGLPLFERKSNPLRFT. A DNA-binding region (H-T-H motif) is located at residues 23-42; it reads VSLAAKRVYLTQSALSHQIK.

This sequence belongs to the LysR transcriptional regulatory family.

Its subcellular location is the cytoplasm. In terms of biological role, control of the last step in methionine biosynthesis; MetR is a positive activator of the metA, metE and metH genes. The protein is HTH-type transcriptional regulator MetR (metR) of Haemophilus influenzae (strain ATCC 51907 / DSM 11121 / KW20 / Rd).